We begin with the raw amino-acid sequence, 475 residues long: uncharacterized protein (475 aa).

The interval 42 to 292 (NLQNSLTGKT…NTRKGQRHNN (251 aa)) is disordered. Composition is skewed to basic and acidic residues over residues 59–72 (EANH…KSED) and 119–134 (IAEK…DDSQ). 2 stretches are compositionally biased toward polar residues: residues 150 to 159 (ITPNFTHTPI) and 220 to 242 (NNTF…TSED). Over residues 243 to 263 (SSSQAPHHSSSSGHAPSQQGG) the composition is skewed to low complexity. Over residues 277 to 289 (FHHKGRNTRKGQR) the composition is skewed to basic residues. Residues 319 to 408 (NPYLCDVQAF…MSIKVRRKET (90 aa)) form the HTH La-type RNA-binding domain. Thr408 is subject to Phosphothreonine. Position 410 is a phosphoserine (Ser410).

It is found in the cytoplasm. This is an uncharacterized protein from Schizosaccharomyces pombe (strain 972 / ATCC 24843) (Fission yeast).